The chain runs to 198 residues: Recombination protein RecR (198 aa).

The C4-type zinc finger occupies 57-72; sequence CSICGNLTDDDPCHIC. Positions 80–175 constitute a Toprim domain; sequence EIILVVEDSK…KVTRLARGLA (96 aa).

It belongs to the RecR family.

May play a role in DNA repair. It seems to be involved in an RecBC-independent recombinational process of DNA repair. It may act with RecF and RecO. In Streptococcus equi subsp. equi (strain 4047), this protein is Recombination protein RecR.